The primary structure comprises 100 residues: UPF0251 protein VV2_0946 (100 aa).

It belongs to the UPF0251 family.

The sequence is that of UPF0251 protein VV2_0946 from Vibrio vulnificus (strain CMCP6).